The following is a 164-amino-acid chain: MQKQHQRQHKVELVANLKSQFVDAKALLICDYKGLSVKKLEALRNKARNQGIKVQVIKNTLAHIAMKEAGYSDLDLKETNVFLWGGDQIALSKLVFDFQKEHKDHFVLKAGLFDKESVSVAHVEAVSKLPSKEELMGMLLSVWTAPARYFVTGLDNLRKAKEEN.

The protein belongs to the universal ribosomal protein uL10 family. In terms of assembly, part of the ribosomal stalk of the 50S ribosomal subunit. The N-terminus interacts with L11 and the large rRNA to form the base of the stalk. The C-terminus forms an elongated spine to which L12 dimers bind in a sequential fashion forming a multimeric L10(L12)X complex.

Its function is as follows. Forms part of the ribosomal stalk, playing a central role in the interaction of the ribosome with GTP-bound translation factors. The chain is Large ribosomal subunit protein uL10 from Helicobacter pylori (strain G27).